Reading from the N-terminus, the 245-residue chain is 3-deoxy-manno-octulosonate cytidylyltransferase (245 aa).

This sequence belongs to the KdsB family.

The protein localises to the cytoplasm. It catalyses the reaction 3-deoxy-alpha-D-manno-oct-2-ulosonate + CTP = CMP-3-deoxy-beta-D-manno-octulosonate + diphosphate. It functions in the pathway nucleotide-sugar biosynthesis; CMP-3-deoxy-D-manno-octulosonate biosynthesis; CMP-3-deoxy-D-manno-octulosonate from 3-deoxy-D-manno-octulosonate and CTP: step 1/1. The protein operates within bacterial outer membrane biogenesis; lipopolysaccharide biosynthesis. Activates KDO (a required 8-carbon sugar) for incorporation into bacterial lipopolysaccharide in Gram-negative bacteria. The chain is 3-deoxy-manno-octulosonate cytidylyltransferase from Desulfatibacillum aliphaticivorans.